The primary structure comprises 187 residues: Elongation factor P (187 aa).

Belongs to the elongation factor P family.

The protein resides in the cytoplasm. The protein operates within protein biosynthesis; polypeptide chain elongation. Functionally, involved in peptide bond synthesis. Stimulates efficient translation and peptide-bond synthesis on native or reconstituted 70S ribosomes in vitro. Probably functions indirectly by altering the affinity of the ribosome for aminoacyl-tRNA, thus increasing their reactivity as acceptors for peptidyl transferase. This chain is Elongation factor P, found in Roseiflexus castenholzii (strain DSM 13941 / HLO8).